A 443-amino-acid polypeptide reads, in one-letter code: Putative F-box/FBD/LRR-repeat protein At5g22670 (443 aa).

The F-box domain occupies 10-56; it reads QDSISLLPDDLLCRILSNLPTKVAVRTSVLSKRWKRFSLSVPLLEFN. LRR repeat units follow at residues 139–165, 166–191, 219–243, 275–300, and 325–353; these read SLRL…HLID, NIYP…NVSR, YGDI…SLRD, NFLL…TMSG, and YAVF…VLEL. Positions 361–412 constitute an FBD domain; that stretch reads LLILSSSIPKCLRSSLEHVEIHTPISGAEAEMKLVKYFLENSAVLKKFTLQL.

This is Putative F-box/FBD/LRR-repeat protein At5g22670 from Arabidopsis thaliana (Mouse-ear cress).